Reading from the N-terminus, the 267-residue chain is Phosphonates import ATP-binding protein PhnC 1 (267 aa).

In terms of domain architecture, ABC transporter spans Leu3–Gln247. Position 36-43 (Gly36–Thr43) interacts with ATP.

The protein belongs to the ABC transporter superfamily. Phosphonates importer (TC 3.A.1.9.1) family. In terms of assembly, the complex is composed of two ATP-binding proteins (PhnC), two transmembrane proteins (PhnE) and a solute-binding protein (PhnD).

The protein resides in the cell inner membrane. The catalysed reaction is phosphonate(out) + ATP + H2O = phosphonate(in) + ADP + phosphate + H(+). In terms of biological role, part of the ABC transporter complex PhnCDE involved in phosphonates import. Responsible for energy coupling to the transport system. The chain is Phosphonates import ATP-binding protein PhnC 1 from Pseudomonas aeruginosa (strain ATCC 15692 / DSM 22644 / CIP 104116 / JCM 14847 / LMG 12228 / 1C / PRS 101 / PAO1).